The primary structure comprises 119 residues: Ribosome-binding factor A (119 aa).

This sequence belongs to the RbfA family. In terms of assembly, monomer. Binds 30S ribosomal subunits, but not 50S ribosomal subunits or 70S ribosomes.

Its subcellular location is the cytoplasm. Functionally, one of several proteins that assist in the late maturation steps of the functional core of the 30S ribosomal subunit. Associates with free 30S ribosomal subunits (but not with 30S subunits that are part of 70S ribosomes or polysomes). Required for efficient processing of 16S rRNA. May interact with the 5'-terminal helix region of 16S rRNA. This chain is Ribosome-binding factor A, found in Mycoplasmoides gallisepticum (strain R(low / passage 15 / clone 2)) (Mycoplasma gallisepticum).